Here is a 1412-residue protein sequence, read N- to C-terminus: MKALLDLFKQVQQEEIFDAIKIGLASPDKIRSWSFGEVKKPETINYRTFKPERDGLFCAKIFGPIKDYECLCGKYKRLKHRGVICEKCGVEVTLAKVRRERMGHIELASPVAHIWFLKSLPSRLGMVLDMTLRDIERVLYFEAYVVIDPGMTPLKARQIMTEEDYYNKVEEYGDEFRAEMGAEGVRELLRSINIDEQVETLRTELKNTGSEAKIKKYAKRLKVLEAFQRSGIKPDWMILEVLPVLPPELRPLVPLDGGRFATSDLNDLYRRVINRNNRLKRLLELKAPEIIVRNEKRMLQEAVDSLLDNGRRGKAMTGANKRPLKSLADMIKGKGGRFRQNLLGKRVDYSGRSVIVVGPTLKLHQCGLPKLMALELFKPFIFNKLEVMGVATTIKAAKKEVENQTPVVWDILEEVIREHPVMLNRAPTLHRLGIQAFEPVLIEGKAIQLHPLVCAAFNADFDGDQMAVHVPLSLEAQMEARTLMLASNNVLFPANGDPSIVPSQDIVLGLYYATREAINGKGEGLSFTGVSEVIRAYENKEVELASRVNVRITEMVRNEDTSEGAPQFVPKISLYATTVGRAILSEILPPGLPFSVLNKPLKKKEISRLINTAFRKCGLRATVVFADQLMQSGFRLATRAGISICVDDMLVPTQKETIVGDAAKKVKEYDRQYMSGLVTAQERYNNVVDIWSATSEAVGKAMMEQLSTEPVIDRGGNETRQESFNSIYMMADSGARGSAVQIRQLAGMRGLMAKPDGSIIETPITANFREGLNVLQYFISTHGARKGLADTALKTANSGYLTRRLVDVTQDLVVVEDDCGTSNGVAMKALVEGGEVVEALRDRILGRVAASDVVNPETQETLYEAGALLDETAVEDIERLGIDEVRVRTALTCETRYGLCASCYGRDLGRGSLVNVGEAVGVIAAQSIGEPGTQLTMRTFHIGGAASRAAVASSVEAKSNGTVRFTASMRYVTNAKGEQIVISRSGEALITDDIGRERERHKIPYGATLLQLDGAAIKAGTQLATWDPLTRPIITEYGGTVKFENVEEGVTVAKQIDDVTGLSTLVVIDVKRRGSQAAKSVRPQVKLLDANGDEVKIPGTEHAVQIGFQVGALITVKDGQQVQVGEVLARIPTESQKTRDITGGLPRVAELFEARSPKDAGILAEVTGTVSFGKDTKGKQRLVITDLEGNQHEFLIAKEKQVLVHDGQVVNKGEMIVDGPADPHDILRLQGIEALSRYIVDEVQDVYRLQGVKINDKHIEVIVRQMLRRVQIVDNGDTRFIPGEQVERSDMLDENDRMIAEDKRPATYDNILLGITKASLSTDSFISAASFQETIRVLTEAAIMGKRDDLRGLKENVIVGRLIPAGTGLAFHKARKAKEQSDRERFDQIAAEEAFEFGTPSAPAEEPQHPAE.

The Zn(2+) site is built by C70, C72, C85, and C88. Residues D460, D462, and D464 each coordinate Mg(2+). The Zn(2+) site is built by C819, C893, C900, and C903. A disordered region spans residues 1392 to 1412 (EEAFEFGTPSAPAEEPQHPAE).

It belongs to the RNA polymerase beta' chain family. In terms of assembly, the RNAP catalytic core consists of 2 alpha, 1 beta, 1 beta' and 1 omega subunit. When a sigma factor is associated with the core the holoenzyme is formed, which can initiate transcription. Requires Mg(2+) as cofactor. Zn(2+) serves as cofactor.

It carries out the reaction RNA(n) + a ribonucleoside 5'-triphosphate = RNA(n+1) + diphosphate. In terms of biological role, DNA-dependent RNA polymerase catalyzes the transcription of DNA into RNA using the four ribonucleoside triphosphates as substrates. The sequence is that of DNA-directed RNA polymerase subunit beta' from Burkholderia mallei (strain NCTC 10247).